The chain runs to 860 residues: Alanine--tRNA ligase (860 aa).

Residues His553, His557, Cys655, and His659 each contribute to the Zn(2+) site.

Belongs to the class-II aminoacyl-tRNA synthetase family. Zn(2+) is required as a cofactor.

Its subcellular location is the cytoplasm. The catalysed reaction is tRNA(Ala) + L-alanine + ATP = L-alanyl-tRNA(Ala) + AMP + diphosphate. Catalyzes the attachment of alanine to tRNA(Ala) in a two-step reaction: alanine is first activated by ATP to form Ala-AMP and then transferred to the acceptor end of tRNA(Ala). Also edits incorrectly charged Ser-tRNA(Ala) and Gly-tRNA(Ala) via its editing domain. The protein is Alanine--tRNA ligase of Legionella pneumophila (strain Corby).